Consider the following 25-residue polypeptide: Unknown protein 4 (25 aa).

The segment covering 1–10 (IEHNAEEIRK) has biased composition (basic and acidic residues). Residues 1–25 (IEHNAEEIRKTAIRTAVQNTAQQTK) are disordered. Polar residues predominate over residues 16–25 (AVQNTAQQTK).

The polypeptide is Unknown protein 4 (Lonomia obliqua (Moth)).